The primary structure comprises 524 residues: Ribonuclease Y (524 aa).

The chain crosses the membrane as a helical span at residues 3–23 (IVINLLLLVLAALVAFVAGFF). Residues 214–280 (ALSVVHIQSD…KLTLKKLLAD (67 aa)) enclose the KH domain. The region spanning 340-432 (LLQHSREVAM…VDAANTISLS (93 aa)) is the HD domain.

The protein belongs to the RNase Y family.

The protein localises to the cell membrane. In terms of biological role, endoribonuclease that initiates mRNA decay. The sequence is that of Ribonuclease Y from Chlorobium chlorochromatii (strain CaD3).